The sequence spans 313 residues: Aspartate carbamoyltransferase catalytic subunit (313 aa).

Arginine 58 and threonine 59 together coordinate carbamoyl phosphate. Residue lysine 86 coordinates L-aspartate. Residues arginine 108, histidine 136, and glutamine 139 each coordinate carbamoyl phosphate. Residues arginine 169 and arginine 223 each coordinate L-aspartate. Glycine 265 and proline 266 together coordinate carbamoyl phosphate.

It belongs to the aspartate/ornithine carbamoyltransferase superfamily. ATCase family. Heterododecamer (2C3:3R2) of six catalytic PyrB chains organized as two trimers (C3), and six regulatory PyrI chains organized as three dimers (R2).

It catalyses the reaction carbamoyl phosphate + L-aspartate = N-carbamoyl-L-aspartate + phosphate + H(+). It participates in pyrimidine metabolism; UMP biosynthesis via de novo pathway; (S)-dihydroorotate from bicarbonate: step 2/3. Catalyzes the condensation of carbamoyl phosphate and aspartate to form carbamoyl aspartate and inorganic phosphate, the committed step in the de novo pyrimidine nucleotide biosynthesis pathway. The chain is Aspartate carbamoyltransferase catalytic subunit from Anaeromyxobacter dehalogenans (strain 2CP-1 / ATCC BAA-258).